Here is a 685-residue protein sequence, read N- to C-terminus: Protein arginine N-methyltransferase 7 (685 aa).

SAM-dependent MTase PRMT-type domains are found at residues 14–355 (QATW…YSLW) and 364–685 (AESI…LKSI).

It belongs to the class I-like SAM-binding methyltransferase superfamily. Protein arginine N-methyltransferase family. PRMT7 subfamily.

Essential arginine methyltransferase that can both catalyze the formation of omega-N monomethylarginine (MMA) and symmetrical dimethylarginine (sDMA). Specifically mediates the symmetrical dimethylation of arginine residues in the small nuclear ribonucleoproteins SmD1 and SmD3. The polypeptide is Protein arginine N-methyltransferase 7 (Art7) (Drosophila willistoni (Fruit fly)).